We begin with the raw amino-acid sequence, 193 residues long: Large ribosomal subunit protein bL21 (193 aa).

It belongs to the bacterial ribosomal protein bL21 family. Part of the 50S ribosomal subunit. Contacts protein L20.

Functionally, this protein binds to 23S rRNA in the presence of protein L20. In Ruegeria pomeroyi (strain ATCC 700808 / DSM 15171 / DSS-3) (Silicibacter pomeroyi), this protein is Large ribosomal subunit protein bL21.